Here is a 675-residue protein sequence, read N- to C-terminus: Potassium-transporting ATPase ATP-binding subunit (675 aa).

Transmembrane regions (helical) follow at residues 34-54, 65-85, 216-236, and 245-265; these read IMFVVEVGMILTLILICFPDI, LITIFIILLITILFANFSEAF, IALFTLLTTLTIIFLVVIVTL, and LILPIAMLIALTVCLIPTTIG. The active-site 4-aspartylphosphate intermediate is D304. ATP-binding positions include D341, E345, 372-379, and K390; that span reads FTAETRMS. D513 and D517 together coordinate Mg(2+). The next 3 helical transmembrane spans lie at 569-591, 611-631, and 644-664; these read ALTTFSLANDVAKYFAILPALMM, AIISALIFNALIIVALIPIAM, and IFINNMLIYGLGGLIVPFLGI.

The protein belongs to the cation transport ATPase (P-type) (TC 3.A.3) family. Type IA subfamily. The system is composed of three essential subunits: KdpA, KdpB and KdpC.

It localises to the cell membrane. The enzyme catalyses K(+)(out) + ATP + H2O = K(+)(in) + ADP + phosphate + H(+). Its function is as follows. Part of the high-affinity ATP-driven potassium transport (or Kdp) system, which catalyzes the hydrolysis of ATP coupled with the electrogenic transport of potassium into the cytoplasm. This subunit is responsible for energy coupling to the transport system and for the release of the potassium ions to the cytoplasm. The protein is Potassium-transporting ATPase ATP-binding subunit of Staphylococcus aureus (strain MSSA476).